A 145-amino-acid polypeptide reads, in one-letter code: Large ribosomal subunit protein uL13 (145 aa).

This sequence belongs to the universal ribosomal protein uL13 family. In terms of assembly, part of the 50S ribosomal subunit.

Functionally, this protein is one of the early assembly proteins of the 50S ribosomal subunit, although it is not seen to bind rRNA by itself. It is important during the early stages of 50S assembly. The chain is Large ribosomal subunit protein uL13 from Bacillus licheniformis (strain ATCC 14580 / DSM 13 / JCM 2505 / CCUG 7422 / NBRC 12200 / NCIMB 9375 / NCTC 10341 / NRRL NRS-1264 / Gibson 46).